The chain runs to 209 residues: Holliday junction branch migration complex subunit RuvA (209 aa).

The interval 1 to 70 is domain I; that stretch reads MFSYLKGEAI…EDGTYLYGFA (70 aa). Residues 71-149 form a domain II region; sequence SAAARDLFRQ…QWRDQFSLPD (79 aa). The interval 149–153 is flexible linker; sequence DTAAQ. Residues 154–209 form a domain III region; sequence PNAAVHEDLELTLLALGYQETEIRGAIATLSQDSILLQNDNADEWIRRAITLLSQT.

The protein belongs to the RuvA family. In terms of assembly, homotetramer. Forms an RuvA(8)-RuvB(12)-Holliday junction (HJ) complex. HJ DNA is sandwiched between 2 RuvA tetramers; dsDNA enters through RuvA and exits via RuvB. An RuvB hexamer assembles on each DNA strand where it exits the tetramer. Each RuvB hexamer is contacted by two RuvA subunits (via domain III) on 2 adjacent RuvB subunits; this complex drives branch migration. In the full resolvosome a probable DNA-RuvA(4)-RuvB(12)-RuvC(2) complex forms which resolves the HJ.

It localises to the cytoplasm. Its function is as follows. The RuvA-RuvB-RuvC complex processes Holliday junction (HJ) DNA during genetic recombination and DNA repair, while the RuvA-RuvB complex plays an important role in the rescue of blocked DNA replication forks via replication fork reversal (RFR). RuvA specifically binds to HJ cruciform DNA, conferring on it an open structure. The RuvB hexamer acts as an ATP-dependent pump, pulling dsDNA into and through the RuvAB complex. HJ branch migration allows RuvC to scan DNA until it finds its consensus sequence, where it cleaves and resolves the cruciform DNA. The chain is Holliday junction branch migration complex subunit RuvA from Picosynechococcus sp. (strain ATCC 27264 / PCC 7002 / PR-6) (Agmenellum quadruplicatum).